The chain runs to 210 residues: ATP phosphoribosyltransferase (210 aa).

It belongs to the ATP phosphoribosyltransferase family. Short subfamily. Heteromultimer composed of HisG and HisZ subunits.

The protein localises to the cytoplasm. It carries out the reaction 1-(5-phospho-beta-D-ribosyl)-ATP + diphosphate = 5-phospho-alpha-D-ribose 1-diphosphate + ATP. It functions in the pathway amino-acid biosynthesis; L-histidine biosynthesis; L-histidine from 5-phospho-alpha-D-ribose 1-diphosphate: step 1/9. Catalyzes the condensation of ATP and 5-phosphoribose 1-diphosphate to form N'-(5'-phosphoribosyl)-ATP (PR-ATP). Has a crucial role in the pathway because the rate of histidine biosynthesis seems to be controlled primarily by regulation of HisG enzymatic activity. The sequence is that of ATP phosphoribosyltransferase from Bacillus cytotoxicus (strain DSM 22905 / CIP 110041 / 391-98 / NVH 391-98).